A 487-amino-acid chain; its full sequence is Adenylosuccinate synthetase, chloroplastic (487 aa).

The N-terminal 46 residues, 1 to 46 (MSLSTVNHAAAAAAAAGSGKSFSAAAPAAPSVRLPRTRAPAAAAVS), are a transit peptide targeting the chloroplast. GTP is bound by residues 74–80 (GDEGKGK) and 102–104 (GHT). The Proton acceptor role is filled by Asp75. Residues Asp75 and Gly102 each contribute to the Mg(2+) site. IMP is bound by residues 75-78 (DEGK), 100-103 (NAGH), Thr192, Arg206, Gln286, Thr301, and Arg365. The Proton donor role is filled by His103. 361–367 (TTTGRPR) is a substrate binding site. GTP-binding positions include Arg367, 393–395 (KLD), and 476–478 (GVG).

It belongs to the adenylosuccinate synthetase family. Homodimer. Mg(2+) serves as cofactor.

It is found in the plastid. The protein resides in the chloroplast. It catalyses the reaction IMP + L-aspartate + GTP = N(6)-(1,2-dicarboxyethyl)-AMP + GDP + phosphate + 2 H(+). It participates in purine metabolism; AMP biosynthesis via de novo pathway; AMP from IMP: step 1/2. Plays an important role in the de novo pathway and in the salvage pathway of purine nucleotide biosynthesis. Catalyzes the first committed step in the biosynthesis of AMP from IMP. The sequence is that of Adenylosuccinate synthetase, chloroplastic from Oryza sativa subsp. indica (Rice).